Here is a 329-residue protein sequence, read N- to C-terminus: uncharacterized protein (329 aa).

The signal sequence occupies residues 1–22 (MPLCNNFSGNLVVAVALFFAGA).

This is an uncharacterized protein from Arabidopsis thaliana (Mouse-ear cress).